The chain runs to 765 residues: Nucleolar transcription factor 1 (765 aa).

Methionine 1 is subject to N-acetylmethionine. The disordered stretch occupies residues 1-21; it reads MNGEADCPTDLEMAAPKGQDR. DNA-binding regions (HMG box) lie at residues 112 to 180 and 196 to 264; these read PKKP…ARFR and PEKP…RDYI. A Phosphothreonine modification is found at threonine 201. Serine 273, serine 336, and serine 364 each carry phosphoserine. Positions 298–362 form a DNA-binding region, HMG box 3; sequence TKPPPNSYSL…DYEVELLRFL (65 aa). The span at 370-379 shows a compositional bias: basic and acidic residues; the sequence is QQRVLGEEKM. Residues 370 to 411 form a disordered region; that stretch reads QQRVLGEEKMLNINKKQTTSPASKKPSQEGGKGGSEKPKRPV. 9 positions are modified to phosphoserine: serine 389, serine 412, serine 433, serine 435, serine 484, serine 495, serine 546, serine 584, and serine 638. 3 consecutive DNA-binding regions (HMG box) follow at residues 407–475, 482–549, and 568–634; these read PKRP…GGER, PESP…SEMR, and KKPP…DLWV. Positions 456–487 are disordered; that stretch reads YKAREAALKAQSERKPGGEREDRGKLPESPKR. Residues 457–487 are compositionally biased toward basic and acidic residues; that stretch reads KAREAALKAQSERKPGGEREDRGKLPESPKR. Residues 546 to 576 form a disordered region; it reads SEMRAPPAATNSSKKMKFQGEPKKPPMNGYQ. Residues 649–765 form a disordered region; the sequence is ISNKRKNMTK…SGDSSDSGSN (117 aa). The span at 664 to 674 shows a compositional bias: polar residues; it reads PKSSRTTLQSK. Over residues 677 to 746 the composition is skewed to acidic residues; sequence SEEDDDEEEE…DDDEDEDNES (70 aa). Positions 747-765 are enriched in low complexity; sequence EGSSSSSSSSGDSSDSGSN.

In terms of assembly, homodimer. Part of Pol I pre-initiation complex (PIC), in which Pol I core assembles with RRN3 and promoter-bound UTBF and SL1/TIF-IB complex. Interacts with TOP2A in the context of Pol I complex. Interacts with TBP. Interacts with TAF1A. Interacts with RASL11A. Binds to IRS1 and PIK3CA. Interacts with DHX33. Interacts with PHF6. Interacts with CEBPA (isoform 1 and isoform 4). Interacts with DDX11. Interacts with NOP53. Interacts with ALKBH2. Post-translationally, phosphorylated and activated by PIK3CA.

The protein localises to the nucleus. The protein resides in the nucleolus. In terms of biological role, recognizes the ribosomal RNA gene promoter and activates transcription mediated by RNA polymerase I through cooperative interactions with the transcription factor SL1/TIF-IB complex. It binds specifically to the upstream control element. The protein is Nucleolar transcription factor 1 (Ubtf) of Mus musculus (Mouse).